Consider the following 87-residue polypeptide: Phosphoribosyl-ATP pyrophosphatase (87 aa).

This sequence belongs to the PRA-PH family.

It is found in the cytoplasm. It carries out the reaction 1-(5-phospho-beta-D-ribosyl)-ATP + H2O = 1-(5-phospho-beta-D-ribosyl)-5'-AMP + diphosphate + H(+). It participates in amino-acid biosynthesis; L-histidine biosynthesis; L-histidine from 5-phospho-alpha-D-ribose 1-diphosphate: step 2/9. The protein is Phosphoribosyl-ATP pyrophosphatase (hisE) of Corynebacterium glutamicum (strain ATCC 13032 / DSM 20300 / JCM 1318 / BCRC 11384 / CCUG 27702 / LMG 3730 / NBRC 12168 / NCIMB 10025 / NRRL B-2784 / 534).